A 342-amino-acid polypeptide reads, in one-letter code: (Lyso)-N-acylphosphatidylethanolamine lipase (342 aa).

Positions 70 to 323 constitute an AB hydrolase-1 domain; it reads PLVMVHGFGG…EIEGASHHVY (254 aa).

This sequence belongs to the peptidase S33 family. ABHD4/ABHD5 subfamily. As to expression, highest levels in the CNS and in testis, intermediate levels in liver and kidney. Hardly detectable in heart.

It carries out the reaction N-hexadecanoyl-1,2-di-(9Z-octadecenoyl)-sn-glycero-3-phosphoethanolamine + H2O = N-hexadecanoyl-1-(9Z-octadecenoyl)-sn-glycero-3-phosphoethanolamine + (9Z)-octadecenoate + H(+). It catalyses the reaction an N-acyl-1,2-diacyl-sn-glycero-3-phosphoethanolamine + H2O = N,1-diacyl-sn-glycero-3-phosphoethanolamine + a fatty acid + H(+). The enzyme catalyses N-hexadecanoyl-1-(9Z-octadecenoyl)-sn-glycero-3-phosphoethanolamine + H2O = N-hexadecanoyl-sn-glycero-3-phosphoethanolamine + (9Z)-octadecenoate + H(+). The catalysed reaction is N-octadecanoyl-1-(9Z-octadecenoyl)-sn-glycero-3-phosphoethanolamine + H2O = N-octadecanoyl-sn-glycero-3-phospho-ethanolamine + (9Z)-octadecenoate + H(+). It carries out the reaction N-eicosanoyl-1-(9Z-octadecenoyl)-sn-glycero-3-phosphoethanolamine + H2O = N-eicosanoyl-sn-glycero-3-phosphoethanolamine + (9Z)-octadecenoate + H(+). It catalyses the reaction N,1-di-(9Z-octadecenoyl)-sn-glycero-3-phosphoethanolamine + H2O = N-(9Z-octadecenoyl)-sn-glycero-3-phosphoethanolamine + (9Z)-octadecenoate + H(+). The enzyme catalyses N-(5Z,8Z,11Z,14Z-eicosatetraenoyl)-1-(9Z-octadecenoyl)-sn-glycero-3-phosphoethanolamine + H2O = N-(5Z,8Z,11Z,14Z-eicosatetraenoyl)-sn-glycero-3-phosphoethanolamine + (9Z)-octadecenoate + H(+). The catalysed reaction is 1-octadecanoyl-2-(9Z-octadecenoyl)-sn-glycero-3-phospho-(N-hexadecanoyl)-serine + H2O = 1-octadecanoyl-2-hydroxy-sn-glycero-3-phospho-(N-hexadecanoyl)-serine + (9Z)-octadecenoate + H(+). It carries out the reaction 1-O-(1Z-octadecenoyl)-2-(9Z-octadecenoyl)-sn-glycero-3-phospho-N-hexadecanoyl-ethanolamine + H2O = 1-O-(1Z-octadecenyl)-sn-glycero-3-phospho-N-hexadecanoyl-ethanolamine + (9Z)-octadecenoate + H(+). It catalyses the reaction N,1-diacyl-sn-glycero-3-phosphoethanolamine + H2O = N-acyl-sn-glycero-3-phosphoethanolamine + a fatty acid + H(+). Functionally, lysophospholipase selective for N-acyl phosphatidylethanolamine (NAPE). Contributes to the biosynthesis of N-acyl ethanolamines, including the endocannabinoid anandamide by hydrolyzing the sn-1 and sn-2 acyl chains from N-acyl phosphatidylethanolamine (NAPE) generating glycerophospho-N-acyl ethanolamine (GP-NAE), an intermediate for N-acyl ethanolamine biosynthesis. Hydrolyzes substrates bearing saturated, monounsaturated, polyunsaturated N-acyl chains. Shows no significant activity towards other lysophospholipids, including lysophosphatidylcholine, lysophosphatidylethanolamine and lysophosphatidylserine. This Mus musculus (Mouse) protein is (Lyso)-N-acylphosphatidylethanolamine lipase.